A 178-amino-acid polypeptide reads, in one-letter code: ATP synthase subunit delta (178 aa).

This sequence belongs to the ATPase delta chain family. In terms of assembly, F-type ATPases have 2 components, F(1) - the catalytic core - and F(0) - the membrane proton channel. F(1) has five subunits: alpha(3), beta(3), gamma(1), delta(1), epsilon(1). F(0) has three main subunits: a(1), b(2) and c(10-14). The alpha and beta chains form an alternating ring which encloses part of the gamma chain. F(1) is attached to F(0) by a central stalk formed by the gamma and epsilon chains, while a peripheral stalk is formed by the delta and b chains.

It localises to the cell inner membrane. Functionally, f(1)F(0) ATP synthase produces ATP from ADP in the presence of a proton or sodium gradient. F-type ATPases consist of two structural domains, F(1) containing the extramembraneous catalytic core and F(0) containing the membrane proton channel, linked together by a central stalk and a peripheral stalk. During catalysis, ATP synthesis in the catalytic domain of F(1) is coupled via a rotary mechanism of the central stalk subunits to proton translocation. This protein is part of the stalk that links CF(0) to CF(1). It either transmits conformational changes from CF(0) to CF(1) or is implicated in proton conduction. The protein is ATP synthase subunit delta of Nitrosomonas europaea (strain ATCC 19718 / CIP 103999 / KCTC 2705 / NBRC 14298).